The primary structure comprises 272 residues: NH(3)-dependent NAD(+) synthetase (272 aa).

45–52 (GISGGQDS) provides a ligand contact to ATP. Residue D51 participates in Mg(2+) binding. R138 serves as a coordination point for deamido-NAD(+). ATP is bound at residue T158. E163 contributes to the Mg(2+) binding site. The deamido-NAD(+) site is built by K171 and D178. ATP contacts are provided by K187 and T209. 258–259 (HK) is a deamido-NAD(+) binding site.

It belongs to the NAD synthetase family. Homodimer.

The enzyme catalyses deamido-NAD(+) + NH4(+) + ATP = AMP + diphosphate + NAD(+) + H(+). The protein operates within cofactor biosynthesis; NAD(+) biosynthesis; NAD(+) from deamido-NAD(+) (ammonia route): step 1/1. Functionally, catalyzes the ATP-dependent amidation of deamido-NAD to form NAD. Uses ammonia as a nitrogen source. The protein is NH(3)-dependent NAD(+) synthetase of Bacillus licheniformis (strain ATCC 14580 / DSM 13 / JCM 2505 / CCUG 7422 / NBRC 12200 / NCIMB 9375 / NCTC 10341 / NRRL NRS-1264 / Gibson 46).